The following is a 237-amino-acid chain: Insulin-like growth factor-binding protein 6 (237 aa).

The signal sequence occupies residues 1 to 25 (MTPHRLLPPLLLTLLLAARPGGALA). Positions 26–105 (RCPGCGQGVS…LQGRGRCGRA (80 aa)) constitute an IGFBP N-terminal domain. Disulfide bonds link C27–C30, C38–C42, C55–C61, C69–C82, and C76–C102. Positions 101–158 (RCGRARTPSGENPKESKPQAGTARSQDVNRRDQQRNSGTSTTPSRSNSGGVQDTEMGP) are disordered. The segment covering 135–151 (RNSGTSTTPSRSNSGGV) has biased composition (polar residues). The 76-residue stretch at 156–231 (MGPCRKHLDS…SEGGDGSSLC (76 aa)) folds into the Thyroglobulin type-1 domain. Disulfide bonds link C159–C186, C197–C208, and C210–C231. Residues 215 to 237 (GQPLPGSSEGGDGSSLCPTGSSG) form a disordered region.

In terms of assembly, interacts (via C-terminal domain) with PHB2. O-glycosylated.

Its subcellular location is the secreted. Functionally, IGF-binding proteins prolong the half-life of the IGFs and have been shown to either inhibit or stimulate the growth promoting effects of the IGFs on cell culture. They alter the interaction of IGFs with their cell surface receptors. Activates the MAPK signaling pathway and induces cell migration. This is Insulin-like growth factor-binding protein 6 (IGFBP6) from Bos taurus (Bovine).